Consider the following 208-residue polypeptide: Large ribosomal subunit protein uL4 (208 aa).

The interval 44–89 (RRQGTHKAKNRSEVRGGGRKPYRQKGTGHARQGSTRSPLMTGGGTI) is disordered. A compositionally biased stretch (basic residues) spans 60-71 (GGRKPYRQKGTG).

Belongs to the universal ribosomal protein uL4 family. In terms of assembly, part of the 50S ribosomal subunit.

In terms of biological role, one of the primary rRNA binding proteins, this protein initially binds near the 5'-end of the 23S rRNA. It is important during the early stages of 50S assembly. It makes multiple contacts with different domains of the 23S rRNA in the assembled 50S subunit and ribosome. Its function is as follows. Forms part of the polypeptide exit tunnel. The chain is Large ribosomal subunit protein uL4 from Chlorobium phaeobacteroides (strain BS1).